Reading from the N-terminus, the 164-residue chain is Pheromone-binding protein 2 (164 aa).

The first 22 residues, 1 to 22 (MIRKVLLSVLLAVLMTINLGQA), serve as a signal peptide directing secretion. 3 cysteine pairs are disulfide-bonded: C41–C76, C72–C130, and C119–C139.

This sequence belongs to the PBP/GOBP family. Antenna.

This major soluble protein in olfactory sensilla of male moths might serve to solubilize the extremely hydrophobic pheromone molecules and to transport pheromone through the aqueous lymph to receptors located on olfactory cilia. This chain is Pheromone-binding protein 2, found in Antheraea pernyi (Chinese oak silk moth).